We begin with the raw amino-acid sequence, 325 residues long: Cytochrome c1, heme protein, mitochondrial (325 aa).

A mitochondrion-targeting transit peptide spans 1–84 (MAAAAASLRR…AVALHSAVSA (84 aa)). Topologically, residues 85–287 (SDLELHPPSY…SEPEHDHRKR (203 aa)) are mitochondrial intermembrane. The Cytochrome c domain occupies 108–209 (TSIRRGFQVY…IVRARHGGED (102 aa)). Heme c-binding residues include C121, C124, H125, and M244. A helical transmembrane segment spans residues 288–308 (MGLKMLLMMGLLLPLTYAMKR). Residues 309-325 (HKWSVLKSRKLAYRPPK) are Mitochondrial matrix-facing.

It belongs to the cytochrome c family. Component of the ubiquinol-cytochrome c oxidoreductase (cytochrome b-c1 complex, complex III, CIII), a multisubunit enzyme composed of 11 subunits. The complex is composed of 3 respiratory subunits cytochrome b, cytochrome c1 and Rieske protein UQCRFS1, 2 core protein subunits UQCRC1/QCR1 and UQCRC2/QCR2, and 6 low-molecular weight protein subunits UQCRH/QCR6, UQCRB/QCR7, UQCRQ/QCR8, UQCR10/QCR9, UQCR11/QCR10 and subunit 9, the cleavage product of Rieske protein UQCRFS1. The complex exists as an obligatory dimer and forms supercomplexes (SCs) in the inner mitochondrial membrane with NADH-ubiquinone oxidoreductase (complex I, CI) and cytochrome c oxidase (complex IV, CIV), resulting in different assemblies (supercomplex SCI(1)III(2)IV(1) and megacomplex MCI(2)III(2)IV(2)). Interacts with FLVCR2; this interaction occurs in the absence of heme and is disrupted upon heme binding. Heme c is required as a cofactor.

The protein resides in the mitochondrion inner membrane. The catalysed reaction is a quinol + 2 Fe(III)-[cytochrome c](out) = a quinone + 2 Fe(II)-[cytochrome c](out) + 2 H(+)(out). Functionally, component of the ubiquinol-cytochrome c oxidoreductase, a multisubunit transmembrane complex that is part of the mitochondrial electron transport chain which drives oxidative phosphorylation. The respiratory chain contains 3 multisubunit complexes succinate dehydrogenase (complex II, CII), ubiquinol-cytochrome c oxidoreductase (cytochrome b-c1 complex, complex III, CIII) and cytochrome c oxidase (complex IV, CIV), that cooperate to transfer electrons derived from NADH and succinate to molecular oxygen, creating an electrochemical gradient over the inner membrane that drives transmembrane transport and the ATP synthase. The cytochrome b-c1 complex catalyzes electron transfer from ubiquinol to cytochrome c, linking this redox reaction to translocation of protons across the mitochondrial inner membrane, with protons being carried across the membrane as hydrogens on the quinol. In the process called Q cycle, 2 protons are consumed from the matrix, 4 protons are released into the intermembrane space and 2 electrons are passed to cytochrome c. Cytochrome c1 is a catalytic core subunit containing a c-type heme. It transfers electrons from the [2Fe-2S] iron-sulfur cluster of the Rieske protein to cytochrome c. The protein is Cytochrome c1, heme protein, mitochondrial (Cyc1) of Mus musculus (Mouse).